We begin with the raw amino-acid sequence, 426 residues long: Glutamate-1-semialdehyde 2,1-aminomutase (426 aa).

Lysine 265 bears the N6-(pyridoxal phosphate)lysine mark.

Belongs to the class-III pyridoxal-phosphate-dependent aminotransferase family. HemL subfamily. As to quaternary structure, homodimer. Pyridoxal 5'-phosphate is required as a cofactor.

It is found in the cytoplasm. It carries out the reaction (S)-4-amino-5-oxopentanoate = 5-aminolevulinate. It functions in the pathway porphyrin-containing compound metabolism; protoporphyrin-IX biosynthesis; 5-aminolevulinate from L-glutamyl-tRNA(Glu): step 2/2. This Shigella boydii serotype 4 (strain Sb227) protein is Glutamate-1-semialdehyde 2,1-aminomutase.